A 152-amino-acid polypeptide reads, in one-letter code: Transcription factor XE1.1 (152 aa).

Disordered stretches follow at residues 1–54 (RDDF…ANNA) and 123–152 (KVSA…MGHM). 2 stretches are compositionally biased toward basic and acidic residues: residues 7-22 (DDMK…EMKS) and 38-54 (PEQK…ANNA). The bHLH domain maps to 47–100 (ERRMANNARERLRVRDINEAFKELGRMCQLHLKSEKPQTKLLILHQAVAVILNL). Positions 102–125 (QQVRERNLNPKAACLKRREEEKVS) are class A specific domain. The segment covering 143–152 (TDTTNPMGHM) has biased composition (polar residues).

As to quaternary structure, efficient DNA binding requires dimerization with another bHLH protein. Forms homo- or heterooligomers with myogenin, E12 and ITF2 proteins.

It is found in the nucleus. In terms of biological role, transcriptional regulator. Involved in the initiation of neuronal differentiation. Activates transcription by binding to the E box-containing promoter. The protein is Transcription factor XE1.1 of Xenopus laevis (African clawed frog).